We begin with the raw amino-acid sequence, 399 residues long: Lymphoid enhancer-binding factor 1 (399 aa).

Over residues 1-14 (MPQLSGGGGGGGGD) the composition is skewed to gly residues. The segment at 1–62 (MPQLSGGGGG…IKSSLVNESE (62 aa)) is CTNNB1-binding. The interval 1–104 (MPQLSGGGGG…KHPDGGLYNK (104 aa)) is disordered. Composition is skewed to basic and acidic residues over residues 24–45 (IPFK…SHPE) and 82–98 (PYHD…KHPD). Lys-27 is covalently cross-linked (Glycyl lysine isopeptide (Lys-Gly) (interchain with G-Cter in SUMO)). Position 132 is a phosphoserine (Ser-132). The residue at position 155 (Thr-155) is a Phosphothreonine; by NLK. The residue at position 166 (Ser-166) is a Phosphoserine; by NLK. Disordered stretches follow at residues 166-192 (SPGS…PAPD) and 268-298 (VKQE…KRPH). A Glycyl lysine isopeptide (Lys-Gly) (interchain with G-Cter in SUMO) cross-link involves residue Lys-269. Residues 269 to 296 (KQEHPHTDSDLMHVKPQHEQRKEQEPKR) are compositionally biased toward basic and acidic residues. A DNA-binding region (HMG box) is located at residues 299–367 (IKKPLNAFML…LHMQLYPGWS (69 aa)). The interval 369–399 (RDNYGKKKKRKREKLQESASGTGPRMTAAYI) is disordered.

This sequence belongs to the TCF/LEF family. Binds the armadillo repeat of CTNNB1 and forms a stable complex. Interacts with EP300, TLE1 and PIASG. Binds ALYREF/THOC4, MDFI and MDFIC. Interacts with NLK. Interacts with DAZAP2. Phosphorylated at Thr-155 and/or Ser-166 by NLK. Phosphorylation by NLK at these sites represses LEF1-mediated transcriptional activation of target genes of the canonical Wnt signaling pathway. Detected in thymus. Not detected in normal colon, but highly expressed in colon cancer biopsies and colon cancer cell lines. Expressed in several pancreatic tumors and weakly expressed in normal pancreatic tissue. Isoforms 1 and 5 are detected in several pancreatic cell lines.

The protein resides in the nucleus. Functionally, transcription factor that binds DNA in a sequence-specific manner. Participates in the Wnt signaling pathway. Activates transcription of target genes in the presence of CTNNB1 and EP300. PIAG antagonizes both Wnt-dependent and Wnt-independent activation by LEF1. TLE1, TLE2, TLE3 and TLE4 repress transactivation mediated by LEF1 and CTNNB1. Regulates T-cell receptor alpha enhancer function. Required for IL17A expressing gamma-delta T-cell maturation and development, via binding to regulator loci of BLK to modulate expression. Acts as a positive regulator of odontoblast differentiation during mesenchymal tooth germ formation, expression is repressed during the bell stage by MSX1-mediated inhibition of CTNNB1 signaling. May play a role in hair cell differentiation and follicle morphogenesis. In terms of biological role, transcriptionally activates MYC and CCND1 expression and enhances proliferation of pancreatic tumor cells. Its function is as follows. Lacks the CTNNB1 interaction domain and may therefore be an antagonist for Wnt signaling. Transcriptionally activates the fibronectin promoter, binds to and represses transcription from the E-cadherin promoter in a CTNNB1-independent manner, and is involved in reducing cellular aggregation and increasing cell migration of pancreatic cancer cells. This chain is Lymphoid enhancer-binding factor 1, found in Homo sapiens (Human).